A 1801-amino-acid chain; its full sequence is Laminin subunit beta-2 (1801 aa).

An N-terminal signal peptide occupies residues 1–35 (MEWASGKPGRGRQGQPVPWELRLGLLLSVLAATLA). The 240-residue stretch at 46–285 (SRGSCYPATG…ALYELVIRGN (240 aa)) folds into the Laminin N-terminal domain. A glycan (N-linked (GlcNAc...) asparagine) is linked at Asn-251. Intrachain disulfides connect Cys-286–Cys-295, Cys-288–Cys-313, Cys-315–Cys-324, Cys-327–Cys-347, Cys-350–Cys-359, Cys-352–Cys-377, Cys-380–Cys-389, Cys-392–Cys-410, Cys-413–Cys-426, Cys-415–Cys-441, Cys-443–Cys-452, Cys-455–Cys-470, Cys-473–Cys-487, Cys-475–Cys-494, Cys-496–Cys-505, Cys-508–Cys-522, Cys-525–Cys-537, Cys-527–Cys-544, and Cys-546–Cys-555. Laminin EGF-like domains follow at residues 286–349 (CFCY…ACRK), 350–412 (CECN…ACRP), 413–472 (CDCD…GCQR), and 473–524 (CQCN…GCRP). Asn-371 is a glycosylation site (N-linked (GlcNAc...) asparagine). The region spanning 525–555 (CDCDVGGALDPQCDEATGQCPCRPHMIGRRC) is the Laminin EGF-like 5; truncated domain. The 217-residue stretch at 564 to 780 (RPFLDHLTWE…LLISASSLVY (217 aa)) folds into the Laminin IV type B domain. 32 disulfides stabilise this stretch: Cys-786–Cys-798, Cys-788–Cys-805, Cys-807–Cys-816, Cys-819–Cys-831, Cys-834–Cys-846, Cys-836–Cys-853, Cys-855–Cys-864, Cys-867–Cys-877, Cys-880–Cys-889, Cys-882–Cys-896, Cys-899–Cys-908, Cys-911–Cys-927, Cys-930–Cys-946, Cys-932–Cys-957, Cys-959–Cys-968, Cys-971–Cys-986, Cys-989–Cys-1003, Cys-991–Cys-1010, Cys-1013–Cys-1022, Cys-1025–Cys-1038, Cys-1041–Cys-1061, Cys-1043–Cys-1068, Cys-1070–Cys-1079, Cys-1082–Cys-1095, Cys-1098–Cys-1110, Cys-1100–Cys-1117, Cys-1119–Cys-1128, Cys-1131–Cys-1143, Cys-1146–Cys-1158, Cys-1148–Cys-1165, Cys-1167–Cys-1176, and Cys-1179–Cys-1190. Laminin EGF-like domains follow at residues 786–833 (CQCD…GCQA), 834–879 (CQCS…NCRP), 880–929 (CVCN…QCRP), 930–988 (CPCP…RCQL), 989–1040 (CECS…SCHR), 1041–1097 (CTCN…GCQP), 1098–1145 (CACH…QCRA), and 1146–1192 (CDCD…ACHP). The N-linked (GlcNAc...) asparagine glycan is linked to Asn-1088. Residues 1193–1412 (CHACFGDWDR…LSLTGVNELV (220 aa)) form a domain II region. Asn-1252 carries an N-linked (GlcNAc...) asparagine glycan. Residues 1259–1306 (AKLVEATEGLRHEIGKTTERLTQLEAELTDVQDENFNANHALSGLERD) adopt a coiled-coil conformation. 2 N-linked (GlcNAc...) asparagine glycosylation sites follow: Asn-1311 and Asn-1351. The interval 1413–1445 (CGAPGDAPCATSPCGGAGCRDEDGQPRCGGLGC) is domain alpha. Residues 1446 to 1801 (SGAAATADLA…LQVQIYNTCQ (356 aa)) form a domain I region. Positions 1475 to 1529 (GILSRVSETRRQAEEAQQRAQAALDKANASRGQVEQANQELRELIQNVKDFLSQE) form a coiled coil. An N-linked (GlcNAc...) asparagine glycan is attached at Asn-1502. Ser-1535 bears the Phosphoserine mark. Residues 1576 to 1793 (LAHTMGDVRR…RSVLQAINLQ (218 aa)) are a coiled coil. Over residues 1684–1694 (ASTAEETAGSA) the composition is skewed to low complexity. The disordered stretch occupies residues 1684–1703 (ASTAEETAGSAQSRAREAEK).

In terms of assembly, laminin is a complex glycoprotein, consisting of three different polypeptide chains (alpha, beta, gamma), which are bound to each other by disulfide bonds into a cross-shaped molecule comprising one long and three short arms with globules at each end. Beta-2 is a subunit of laminin-3 (laminin-121 or S-laminin), laminin-4 (laminin-221 or S-merosin), laminin-7 (laminin-321 or KS-laminin), laminin-9 (laminin-421), laminin-11 (laminin-521), laminin-14 (laminin-423) and laminin-15 (laminin-523). Found in the basement membranes (major component). S-laminin is concentrated in the synaptic cleft of the neuromuscular junction.

Its subcellular location is the secreted. It localises to the extracellular space. The protein localises to the extracellular matrix. The protein resides in the basement membrane. Its function is as follows. Binding to cells via a high affinity receptor, laminin is thought to mediate the attachment, migration and organization of cells into tissues during embryonic development by interacting with other extracellular matrix components. This Rattus norvegicus (Rat) protein is Laminin subunit beta-2 (Lamb2).